The following is a 1052-amino-acid chain: ATP-dependent DNA helicase MPH1 (1052 aa).

Residues 89–256 (IVRKGLLQNI…EVVNNLNISK (168 aa)) enclose the Helicase ATP-binding domain. 102 to 109 (IPTGMGKT) contacts ATP. The short motif at 204–207 (DEAH) is the DEAH box element. The Helicase C-terminal domain maps to 432–649 (ELTQFFYENP…HLVQYRKSDR (218 aa)). Disordered stretches follow at residues 495-550 (HGPK…NQKQ), 798-832 (IGDTRNKAKASSSMKVKKEPTMAVDHSDDEEDLPL), 869-898 (SKRQRLQPEVQPEVQPEVQPEVQPEVQPEV), and 1002-1052 (HTVS…DSDF). Residues 503–532 (SDREKRLEEERRMDEEKKQAALQEKLERTS) are compositionally biased toward basic and acidic residues. Residues 534-549 (RTGSSEEAQLSGMNQK) are compositionally biased toward polar residues. Composition is skewed to low complexity over residues 875-898 (QPEVQPEVQPEVQPEVQPEVQPEV) and 1005-1028 (SQSQGQSNSQSQAHSTSQKSQQAS). The span at 1029–1040 (QKDRSSQDKDLT) shows a compositional bias: basic and acidic residues. Residues 1043–1052 (ELEDLLDSDF) are compositionally biased toward acidic residues.

It belongs to the DEAD box helicase family. DEAH subfamily. FANCM sub-subfamily. Interacts with the MHF histone-fold complex to form the FANCM-MHF complex.

The protein resides in the nucleus. The enzyme catalyses ATP + H2O = ADP + phosphate + H(+). ATP-dependent DNA helicase involved in DNA damage repair by homologous recombination and in genome maintenance. Capable of unwinding D-loops. Plays a role in limiting crossover recombinants during mitotic DNA double-strand break (DSB) repair. Component of a FANCM-MHF complex which promotes gene conversion at blocked replication forks, probably by reversal of the stalled fork. This is ATP-dependent DNA helicase MPH1 from Candida glabrata (strain ATCC 2001 / BCRC 20586 / JCM 3761 / NBRC 0622 / NRRL Y-65 / CBS 138) (Yeast).